Consider the following 153-residue polypeptide: Prostaglandin E synthase (153 aa).

Topologically, residues 1–13 are lumenal; that stretch reads MPPPSLAMVSGQA. A helical transmembrane segment spans residues 14-42; the sequence is LPAFLLCSTLLVIKMYAVAVITGQVRLRK. Arg39 lines the glutathione pocket. Topologically, residues 43-61 are cytoplasmic; the sequence is KAFANPEDALRHGGLQFHR. A helical membrane pass occupies residues 62-91; the sequence is DDQDVERCLRAHRNDMETIYPFLFLGLVYS. Position 74–78 (74–78) interacts with glutathione; sequence RNDME. The Lumenal portion of the chain corresponds to 92–96; the sequence is FLGPD. The helical transmembrane segment at 97-120 threads the bilayer; that stretch reads PFVAQMHFLVFFLGRMVHTVAYLG. His114 and Tyr118 together coordinate glutathione. The Cytoplasmic portion of the chain corresponds to 121–124; the sequence is KLRA. Residues 125–153 form a helical membrane-spanning segment; that stretch reads PTRSLAYTVAQLPCASMALQIVWEAARHL. Residue 127 to 131 coordinates glutathione; it reads RSLAY.

This sequence belongs to the MAPEG family. As to quaternary structure, homotrimer. The cofactor is glutathione.

The protein resides in the membrane. The protein localises to the cytoplasm. It is found in the perinuclear region. The enzyme catalyses prostaglandin H2 = prostaglandin E2. It catalyses the reaction 2-glyceryl-prostaglandin H2 = 2-glyceryl-prostaglandin E2. The catalysed reaction is prostaglandin G2 = (15S)-15-hydroperoxy-prostaglandin E2. It carries out the reaction 1-chloro-2,4-dinitrobenzene + glutathione = 2,4-dinitrophenyl-S-glutathione + chloride + H(+). The enzyme catalyses (5S)-hydroperoxy-(6E,8Z,11Z,14Z)-eicosatetraenoate + 2 glutathione = (5S)-hydroxy-(6E,8Z,11Z,14Z)-eicosatetraenoate + glutathione disulfide + H2O. The protein operates within lipid metabolism; prostaglandin biosynthesis. In terms of biological role, terminal enzyme of the cyclooxygenase (COX)-2-mediated prostaglandin E2 (PGE2) biosynthetic pathway. Catalyzes the glutathione-dependent oxidoreduction of prostaglandin endoperoxide H2 (PGH2) to prostaglandin E2 (PGE2) in response to inflammatory stimuli. Plays a key role in inflammation response, fever and pain. Also catalyzes the oxidoreduction of endocannabinoids into prostaglandin glycerol esters and PGG2 into 15-hydroperoxy-PGE2. In addition, displays low glutathione transferase and glutathione-dependent peroxidase activities, toward 1-chloro-2,4-dinitrobenzene and 5-hydroperoxyicosatetraenoic acid (5-HPETE), respectively. The chain is Prostaglandin E synthase (PTGES) from Equus caballus (Horse).